The primary structure comprises 109 residues: Aquaporin-2 (109 aa).

The Cytoplasmic segment spans residues 1–6 (SIAFSR). The helical transmembrane segment at 7 to 27 (AVFTEFLATLLFVFFGLGSAL) threads the bilayer. At 28–35 (NWPQALPS) the chain is on the extracellular side. The helical transmembrane segment at 36–54 (VLQIAMAFGLAIGTLVQML) threads the bilayer. At 55–59 (GHISG) the chain is on the cytoplasmic side. The segment at residues 60–69 (AHINPAVTVA) is an intramembrane region (discontinuously helical). The short motif at 63-65 (NPA) is the NPA 1 element. Over 70–80 (CLVGCHISFLR) the chain is Cytoplasmic. A helical transmembrane segment spans residues 81 to 102 (AAFYVAAQLLGAVAGAALLHEV). The Extracellular portion of the chain corresponds to 103–109 (TPPSIRG).

It belongs to the MIP/aquaporin (TC 1.A.8) family. As to quaternary structure, homotetramer. Post-translationally, serine phosphorylation is necessary and sufficient for expression at the apical membrane. Endocytosis is not phosphorylation-dependent. In terms of processing, N-glycosylated.

The protein resides in the apical cell membrane. It localises to the basolateral cell membrane. Its subcellular location is the cell membrane. It is found in the cytoplasmic vesicle membrane. The protein localises to the golgi apparatus. The protein resides in the trans-Golgi network membrane. The catalysed reaction is H2O(in) = H2O(out). The enzyme catalyses glycerol(in) = glycerol(out). Forms a water-specific channel that provides the plasma membranes of renal collecting duct with high permeability to water, thereby permitting water to move in the direction of an osmotic gradient. Plays an essential role in renal water homeostasis. Could also be permeable to glycerol. In Erinaceus europaeus (Western European hedgehog), this protein is Aquaporin-2.